Consider the following 193-residue polypeptide: Acyl-homoserine-lactone synthase (193 aa).

It belongs to the autoinducer synthase family.

The enzyme catalyses a fatty acyl-[ACP] + S-adenosyl-L-methionine = an N-acyl-L-homoserine lactone + S-methyl-5'-thioadenosine + holo-[ACP] + H(+). Its function is as follows. Required for the synthesis of OHHL (N-(3-oxohexanoyl)-L-homoserine lactone) also known as VAI or N-(beta-ketocaproyl)homoserine lactone or 3-oxo-N-(tetrahydro-2-oxo-3-furanyl)-hexanamide, an autoinducer molecule which binds to LuxR and thus acts in bioluminescence regulation. The sequence is that of Acyl-homoserine-lactone synthase (luxI) from Aliivibrio fischeri (Vibrio fischeri).